A 713-amino-acid chain; its full sequence is Probable arginine--tRNA ligase, cytoplasmic (713 aa).

A disordered region spans residues 74-113 (KNKKNGVKATSTSSPSSSTSAPAEKKAKKDGKTGGAPPKQ). Residues 81-95 (KATSTSSPSSSTSAP) show a composition bias toward low complexity. Residues 96-105 (AEKKAKKDGK) are compositionally biased toward basic and acidic residues. L-arginine contacts are provided by residues 252 to 254 (SPN), His-263, Tyr-438, Asp-442, and Gln-466. Residues 252–263 (SPNIAKEMHVGH) carry the 'HIGH' region motif. Residues 583-597 (NTAVYLLYAYTRIQS) are interaction with tRNA.

Belongs to the class-I aminoacyl-tRNA synthetase family.

Its subcellular location is the cytoplasm. It localises to the cytosol. It catalyses the reaction tRNA(Arg) + L-arginine + ATP = L-arginyl-tRNA(Arg) + AMP + diphosphate. Forms part of a macromolecular complex that catalyzes the attachment of specific amino acids to cognate tRNAs during protein synthesis. In Caenorhabditis elegans, this protein is Probable arginine--tRNA ligase, cytoplasmic.